The following is a 407-amino-acid chain: Rubber oxygenase (407 aa).

Positions methionine 1–alanine 30 form a signal peptide, tat-type signal. Residue histidine 198 coordinates heme.

This sequence belongs to the rubber oxygenase Lcp family. The cofactor is heme b. Post-translationally, exported by the Tat system. The position of the signal peptide cleavage has not been experimentally proven.

The protein resides in the secreted. It participates in biopolymer metabolism. Its function is as follows. Involved in the initial step of rubber degradation. Catalyzes the oxidative C-C cleavage of poly(cis-1,4-isoprene) in synthetic as well as in natural rubber by the addition of oxygen (O2) to the double bonds, leading to a mixture of oligonucleotide-isoprenoids with terminal keto and aldehyde groups (endo-type cleavage). The cleavage products are of different lengths, ranging from C20 (four isoprene units) to higher oligo-isoprenoids. Is not able to cleave low-molecular-weight substrate analogs with isoprenoid structure such as squalene (1,4-trans-isoprenoid), carotenoids, or alpha-tocopherol. This is Rubber oxygenase from Streptomyces sp. (strain K30).